Consider the following 169-residue polypeptide: Crossover junction endodeoxyribonuclease RuvC (169 aa).

Residues Asp7, Glu67, and Asp139 contribute to the active site. Mg(2+)-binding residues include Asp7, Glu67, and Asp139.

The protein belongs to the RuvC family. In terms of assembly, homodimer which binds Holliday junction (HJ) DNA. The HJ becomes 2-fold symmetrical on binding to RuvC with unstacked arms; it has a different conformation from HJ DNA in complex with RuvA. In the full resolvosome a probable DNA-RuvA(4)-RuvB(12)-RuvC(2) complex forms which resolves the HJ. It depends on Mg(2+) as a cofactor.

It is found in the cytoplasm. The catalysed reaction is Endonucleolytic cleavage at a junction such as a reciprocal single-stranded crossover between two homologous DNA duplexes (Holliday junction).. The RuvA-RuvB-RuvC complex processes Holliday junction (HJ) DNA during genetic recombination and DNA repair. Endonuclease that resolves HJ intermediates. Cleaves cruciform DNA by making single-stranded nicks across the HJ at symmetrical positions within the homologous arms, yielding a 5'-phosphate and a 3'-hydroxyl group; requires a central core of homology in the junction. The consensus cleavage sequence is 5'-(A/T)TT(C/G)-3'. Cleavage occurs on the 3'-side of the TT dinucleotide at the point of strand exchange. HJ branch migration catalyzed by RuvA-RuvB allows RuvC to scan DNA until it finds its consensus sequence, where it cleaves and resolves the cruciform DNA. The sequence is that of Crossover junction endodeoxyribonuclease RuvC from Rhodospirillum rubrum (strain ATCC 11170 / ATH 1.1.1 / DSM 467 / LMG 4362 / NCIMB 8255 / S1).